A 194-amino-acid polypeptide reads, in one-letter code: Histone H1.0 (194 aa).

N-acetylmethionine is present on Met1. A compositionally biased stretch (low complexity) spans 1–11 (MTENSTSAPAA). The tract at residues 1 to 29 (MTENSTSAPAAKPKRAKASKKSTDHPKYS) is disordered. Thr2 carries the N-acetylthreonine; partial; in Histone H1.0, N-terminally processed modification. A Deamidated asparagine; partial modification is found at Asn4. Positions 24-97 (DHPKYSDMIV…GASGSFRLAK (74 aa)) constitute an H15 domain. Citrulline is present on Arg42. Residues 84–194 (TKGVGASGSF…SSAKRAGKKK (111 aa)) form a disordered region. The residue at position 104 (Ser104) is an ADP-ribosylserine. Positions 105-194 (VAFKKTKKEI…SSAKRAGKKK (90 aa)) are enriched in basic residues.

This sequence belongs to the histone H1/H5 family. In terms of processing, phosphorylated on Ser-17 in RNA edited version. ADP-ribosylated on Ser-104 in response to DNA damage.

The protein resides in the nucleus. The protein localises to the chromosome. In terms of biological role, histones H1 are necessary for the condensation of nucleosome chains into higher-order structures. The histones H1.0 are found in cells that are in terminal stages of differentiation or that have low rates of cell division. The chain is Histone H1.0 from Homo sapiens (Human).